The chain runs to 155 residues: S-ribosylhomocysteine lyase (155 aa).

Residues histidine 54, histidine 58, and cysteine 122 each coordinate Fe cation.

The protein belongs to the LuxS family. In terms of assembly, homodimer. Fe cation is required as a cofactor.

It carries out the reaction S-(5-deoxy-D-ribos-5-yl)-L-homocysteine = (S)-4,5-dihydroxypentane-2,3-dione + L-homocysteine. In terms of biological role, involved in the synthesis of autoinducer 2 (AI-2) which is secreted by bacteria and is used to communicate both the cell density and the metabolic potential of the environment. The regulation of gene expression in response to changes in cell density is called quorum sensing. Catalyzes the transformation of S-ribosylhomocysteine (RHC) to homocysteine (HC) and 4,5-dihydroxy-2,3-pentadione (DPD). The polypeptide is S-ribosylhomocysteine lyase (Deinococcus geothermalis (strain DSM 11300 / CIP 105573 / AG-3a)).